Consider the following 307-residue polypeptide: Glycine--tRNA ligase alpha subunit (307 aa).

This sequence belongs to the class-II aminoacyl-tRNA synthetase family. In terms of assembly, tetramer of two alpha and two beta subunits.

It is found in the cytoplasm. The catalysed reaction is tRNA(Gly) + glycine + ATP = glycyl-tRNA(Gly) + AMP + diphosphate. This is Glycine--tRNA ligase alpha subunit from Levilactobacillus brevis (strain ATCC 367 / BCRC 12310 / CIP 105137 / JCM 1170 / LMG 11437 / NCIMB 947 / NCTC 947) (Lactobacillus brevis).